Reading from the N-terminus, the 506-residue chain is Histidine ammonia-lyase (506 aa).

Positions 143 to 145 (ASG) form a cross-link, 5-imidazolinone (Ala-Gly). Ser-144 carries the post-translational modification 2,3-didehydroalanine (Ser).

Belongs to the PAL/histidase family. Post-translationally, contains an active site 4-methylidene-imidazol-5-one (MIO), which is formed autocatalytically by cyclization and dehydration of residues Ala-Ser-Gly.

The protein localises to the cytoplasm. The enzyme catalyses L-histidine = trans-urocanate + NH4(+). It functions in the pathway amino-acid degradation; L-histidine degradation into L-glutamate; N-formimidoyl-L-glutamate from L-histidine: step 1/3. In Salmonella gallinarum (strain 287/91 / NCTC 13346), this protein is Histidine ammonia-lyase.